The following is a 536-amino-acid chain: ATP synthase subunit alpha, mitochondrial (536 aa).

The transit peptide at 1-27 directs the protein to the mitochondrion; that stretch reads MLRQAGTRLLKVPVCGLRPSITLKRGY. 197-204 is an ATP binding site; it reads GDRQTGKT.

The protein belongs to the ATPase alpha/beta chains family. As to quaternary structure, F-type ATPases have 2 components, CF(1) - the catalytic core - and CF(0) - the membrane proton channel. CF(1) has five subunits: alpha(3), beta(3), gamma(1), delta(1), epsilon(1). CF(0) has three main subunits: a, b and c.

The protein resides in the mitochondrion. It localises to the mitochondrion inner membrane. Its function is as follows. Mitochondrial membrane ATP synthase (F(1)F(0) ATP synthase or Complex V) produces ATP from ADP in the presence of a proton gradient across the membrane which is generated by electron transport complexes of the respiratory chain. F-type ATPases consist of two structural domains, F(1) - containing the extramembraneous catalytic core, and F(0) - containing the membrane proton channel, linked together by a central stalk and a peripheral stalk. During catalysis, ATP synthesis in the catalytic domain of F(1) is coupled via a rotary mechanism of the central stalk subunits to proton translocation. Subunits alpha and beta form the catalytic core in F(1). Rotation of the central stalk against the surrounding alpha(3)beta(3) subunits leads to hydrolysis of ATP in three separate catalytic sites on the beta subunits. Subunit alpha does not bear the catalytic high-affinity ATP-binding sites. The chain is ATP synthase subunit alpha, mitochondrial (atp1) from Schizosaccharomyces pombe (strain 972 / ATCC 24843) (Fission yeast).